Consider the following 330-residue polypeptide: MTDLSEKVRAWGRRLVVGAAAAATLPGLIGIAGGAATANAFSRPGLPVEYLQVPSAGMGRDIKVQFQSGGNGSPAVYLLDGLRAQDDYNGWDINTPAFEWYYQSGLSVIMPVGGQSSFYADWYQPACGKAGCSTYKWETFLTSELPQYLASNKGVKSTGSAAVGISMSGSSAMILAVNHPNQFVYAGSLSALLDPSQGMGPSLIGLAMGDAGGYKADAMWGPSSDPAWQRNDPSLQIPALVGNNTRLWVYCGNGTPSELGGANMPAEFLENFVRSSNLKFQDAYNAAGGHNAVFNFNANGTHSWEYWGAQLNAMKPDLQSALGASSGGGG.

Residues 1–40 form the signal peptide; the sequence is MTDLSEKVRAWGRRLVVGAAAAATLPGLIGIAGGAATANA. Residue 82 to 83 coordinates substrate; it reads LR. The interval 98–108 is fibronectin-binding; that stretch reads FEWYYQSGLSV. The cysteines at positions 127 and 132 are disulfide-linked. Ser166 and Asp194 together coordinate substrate. Catalysis depends on Ser166, which acts as the Nucleophile. Glu270 is an active-site residue. Residues 272–275, Lys279, and 302–304 contribute to the substrate site; these read FVRS and HSW. The active site involves His302.

This sequence belongs to the mycobacterial A85 antigen family.

It localises to the secreted. It catalyses the reaction 2 alpha,alpha'-trehalose 6-mycolate = alpha,alpha'-trehalose 6,6'-bismycolate + alpha,alpha-trehalose. The catalysed reaction is an acyl-CoA + a 1,2-diacyl-sn-glycerol = a triacyl-sn-glycerol + CoA. The antigen 85 proteins (FbpA, FbpB, FbpC) are responsible for the high affinity of mycobacteria for fibronectin, a large adhesive glycoprotein, which facilitates the attachment of M.tuberculosis to murine alveolar macrophages (AMs). They also help to maintain the integrity of the cell wall by catalyzing the transfer of mycolic acids to cell wall arabinogalactan and through the synthesis of alpha,alpha-trehalose dimycolate (TDM, cord factor). They catalyze the transfer of a mycoloyl residue from one molecule of alpha,alpha-trehalose monomycolate (TMM) to another TMM, leading to the formation of TDM. This is Diacylglycerol acyltransferase/mycolyltransferase Ag85B (fbpB) from Mycobacterium intracellulare (strain ATCC 13950 / DSM 43223 / JCM 6384 / NCTC 13025 / 3600).